The primary structure comprises 412 residues: 8-amino-7-oxononanoate synthase (412 aa).

Substrate is bound at residue Arg-28. A pyridoxal 5'-phosphate-binding site is contributed by 115 to 116 (GY). Residue His-140 coordinates substrate. 3 residues coordinate pyridoxal 5'-phosphate: Ser-186, His-214, and Thr-246. At Lys-249 the chain carries N6-(pyridoxal phosphate)lysine. Thr-367 provides a ligand contact to substrate.

It belongs to the class-II pyridoxal-phosphate-dependent aminotransferase family. BioF subfamily. As to quaternary structure, homodimer. Pyridoxal 5'-phosphate serves as cofactor.

It carries out the reaction 6-carboxyhexanoyl-[ACP] + L-alanine + H(+) = (8S)-8-amino-7-oxononanoate + holo-[ACP] + CO2. The protein operates within cofactor biosynthesis; biotin biosynthesis. In terms of biological role, catalyzes the decarboxylative condensation of pimeloyl-[acyl-carrier protein] and L-alanine to produce 8-amino-7-oxononanoate (AON), [acyl-carrier protein], and carbon dioxide. In Paracidovorax citrulli (strain AAC00-1) (Acidovorax citrulli), this protein is 8-amino-7-oxononanoate synthase.